Here is a 357-residue protein sequence, read N- to C-terminus: Isopentenyl-diphosphate delta-isomerase (357 aa).

12-13 serves as a coordination point for substrate; that stretch reads RK. FMN-binding positions include serine 70, 71-73, serine 101, and asparagine 130; that span reads SMT. 101–103 contributes to the substrate binding site; sequence SMR. Residue glutamine 165 coordinates substrate. Residue glutamate 166 coordinates Mg(2+). Residues lysine 197 and 310-311 each bind FMN; that span reads AR.

Belongs to the IPP isomerase type 2 family. As to quaternary structure, homooctamer. Dimer of tetramers. Requires FMN as cofactor. NADPH serves as cofactor. Mg(2+) is required as a cofactor.

The protein resides in the cytoplasm. It carries out the reaction isopentenyl diphosphate = dimethylallyl diphosphate. Functionally, involved in the biosynthesis of isoprenoids. Catalyzes the 1,3-allylic rearrangement of the homoallylic substrate isopentenyl (IPP) to its allylic isomer, dimethylallyl diphosphate (DMAPP). This Pelodictyon phaeoclathratiforme (strain DSM 5477 / BU-1) protein is Isopentenyl-diphosphate delta-isomerase.